The sequence spans 105 residues: Small ribosomal subunit protein uS10 (105 aa).

This sequence belongs to the universal ribosomal protein uS10 family. Part of the 30S ribosomal subunit.

In terms of biological role, involved in the binding of tRNA to the ribosomes. This chain is Small ribosomal subunit protein uS10, found in Trichormus variabilis (strain ATCC 29413 / PCC 7937) (Anabaena variabilis).